Consider the following 319-residue polypeptide: MSISNPSAASEHLVSVSAPAKINLHLEVLGLRSDGFHELAMVMQSIELADQLHFRNTADGSISLRCDDSSLSTAGDNLIVRAAHLLRERSGFSDLGAAIELQKRIPIGAGLAGGSSDGAATLVGLNGLWNLNFSQGQLEGFAAELGSDMPFCLAGGSQLCFGRGERLESLQAMKASMAVVLVKDPSVSVSTPWAYGRCKELFSSRYLSKESDFEQRRQQLRESSWLNPLRADDPPPLRNDLQEVVAPEVSAVQTTLKLLTDLPGSLAVSMSGSGPSCFALFADVASAQAALQLQQPAFAAAGLSSWCCAFRCEGIKLEA.

Lys-21 is a catalytic residue. Position 106 to 116 (106 to 116) interacts with ATP; that stretch reads PIGAGLAGGSS. Asp-148 is a catalytic residue.

It belongs to the GHMP kinase family. IspE subfamily.

The catalysed reaction is 4-CDP-2-C-methyl-D-erythritol + ATP = 4-CDP-2-C-methyl-D-erythritol 2-phosphate + ADP + H(+). It participates in isoprenoid biosynthesis; isopentenyl diphosphate biosynthesis via DXP pathway; isopentenyl diphosphate from 1-deoxy-D-xylulose 5-phosphate: step 3/6. Functionally, catalyzes the phosphorylation of the position 2 hydroxy group of 4-diphosphocytidyl-2C-methyl-D-erythritol. The polypeptide is 4-diphosphocytidyl-2-C-methyl-D-erythritol kinase (Prochlorococcus marinus (strain MIT 9313)).